The sequence spans 483 residues: FAD-linked oxidoreductase pgmH (483 aa).

The 162-residue stretch at 54–215 folds into the FAD-binding PCMH-type domain; that stretch reads SIRLATLVVY…TEFKYRVHKQ (162 aa).

Belongs to the oxygen-dependent FAD-linked oxidoreductase family. FAD serves as cofactor.

Its pathway is pigment biosynthesis. It participates in secondary metabolite biosynthesis. Functionally, FAD-linked oxidoreductase; part of the gene cluster that mediates the biosynthesis of pleosporalin A, ascomycone A, as well as a third cryptic naphthoquinone derived pigment, all responsible for the coloration of conidia. Essential for the production of pleosporalin A, but not the 2 other final products. The pathway begins with the biosynthesis of the cyclized heptaketide 3-acetonyl-1,6,8-trihydroxy-2-naphthaldehyde by the NR-PKS pgmA. The C-6 hydroxyl group is further methylated by the O-methyltransferase pgmB to yield fusarubinaldehyde which is in turn oxidized by the cytochrome P450 monooxygenase pgmC at C-9. The C-1 hydroxyl group is then methylated spontaneously. Although pgmE, pgmD and pgmH are essential for the production of pleosporalin A, it is not the case for the 2 other final products and it remains difficult to assign a specific function to each enzyme. PgmF and pgmG seem not to be involved in pigment biosynthesis although they were regulated by the cluster-specific transcription factor pgmR. The sequence is that of FAD-linked oxidoreductase pgmH from Aspergillus terreus (strain NIH 2624 / FGSC A1156).